The sequence spans 557 residues: Membrane protein insertase YidC (557 aa).

3 helical membrane passes run 371–391 (WGWSIILLTILIKLVFFPLSA), 437–457 (LGGCLPVVIQIPVFISLYWVL), and 515–535 (PIVFSVMFFFFPAGLVLYWVV).

This sequence belongs to the OXA1/ALB3/YidC family. Type 1 subfamily. Interacts with the Sec translocase complex via SecD. Specifically interacts with transmembrane segments of nascent integral membrane proteins during membrane integration.

It is found in the cell inner membrane. Its function is as follows. Required for the insertion and/or proper folding and/or complex formation of integral membrane proteins into the membrane. Involved in integration of membrane proteins that insert both dependently and independently of the Sec translocase complex, as well as at least some lipoproteins. Aids folding of multispanning membrane proteins. This chain is Membrane protein insertase YidC, found in Polynucleobacter necessarius subsp. necessarius (strain STIR1).